The chain runs to 142 residues: Large ribosomal subunit protein uL13 (142 aa).

This sequence belongs to the universal ribosomal protein uL13 family. Part of the 50S ribosomal subunit.

In terms of biological role, this protein is one of the early assembly proteins of the 50S ribosomal subunit, although it is not seen to bind rRNA by itself. It is important during the early stages of 50S assembly. The polypeptide is Large ribosomal subunit protein uL13 (Shewanella frigidimarina (strain NCIMB 400)).